A 545-amino-acid polypeptide reads, in one-letter code: MKKRWSIVTLMLIFTLVLSACGFGGTGSNGEGKKDSKGKTTLNINIKTEPFSLHPGLANDSVSGGVIRQTFEGLTRINADGEPEEGMASKIETSKDGKTYTFTIRDGVKWSNGDPVTAQDFEYAWKWALDPNNESQYAYQLYYIKGAEAANTGKGSLDDVAVKAVNDKTLKVELNNPTPYFTELTAFYTYMPINEKIAEKNKKWNTNAGDDYVSNGPFKMTAWKHSGSITLEKNDQYWDKDKVKLKKIDMVMINNNNTELKKFQAGELDWAGMPLGQLPTESLPTLKKDGSLHVEPIAGVYWYKFNTEAKPLDNVNIRKALTYSLDRQSIVKNVTQGEQMPAMAAVPPTMKGFEDNKEGYFKDNDVKTAKEYLEKGLKEMGLSKASDLPKIKLSYNTDDAHAKIAQAVQEMWKKNLGVDVELDNSEWNVYIDKLHSQDYQIGRMGWLGDFNDPINFLELFRDKNGGNNDTGWENPEFKKLLNQSQTETDKTKRAELLKKAEGIFIDEMPVAPIYFYTDTWVQDENLKGVIMPGTGEVYFRNAYFK.

The N-terminal stretch at 1–20 (MKKRWSIVTLMLIFTLVLSA) is a signal peptide. The N-palmitoyl cysteine moiety is linked to residue Cys-21. Cys-21 carries S-diacylglycerol cysteine lipidation. Thr-470 bears the Phosphothreonine mark.

It belongs to the bacterial solute-binding protein 5 family. The complex is composed of two ATP-binding proteins (OppD and OppF), two transmembrane proteins (OppB and OppC) and a solute-binding protein (OppA). OppA interacts with FloT in detergent-resistant membranes (DRM). Colocalizes rarely with FloT membrane assemblies.

The protein localises to the cell membrane. It is found in the membrane raft. In terms of biological role, part of the ABC transporter complex OppABCDF involved in the uptake of oligopeptides. Plays an important nutritional role. Binds peptides containing up to five amino acids residues regardless of their sequence, with highest affinity for tetra- and pentapeptides. Binds to the sporulation-promoting peptide PhrE (Ser-Arg-Asn-Val-Thr). Required for sporulation and genetic competence. This is Oligopeptide-binding protein OppA from Bacillus subtilis (strain 168).